The following is a 353-amino-acid chain: uncharacterized protein (353 aa).

The first 30 residues, 1 to 30, serve as a signal peptide directing secretion; that stretch reads MHLRHLFSSRLRGSLLLGSLLVVSSFSTQA.

As to quaternary structure, monomer.

This is an uncharacterized protein from Escherichia coli (strain K12).